We begin with the raw amino-acid sequence, 587 residues long: Protein SIX6OS1 (587 aa).

Residues 356-378 (TPQKQSNSNQWSEKGDKDAEYGD) form a disordered region. The span at 357–367 (PQKQSNSNQWS) shows a compositional bias: polar residues. Residues 368–378 (EKGDKDAEYGD) show a composition bias toward basic and acidic residues. Residue S439 is modified to Phosphoserine. Residues 568–587 (SSSLKGFSSSSQNTTQFTFF) form a disordered region.

In terms of assembly, interacts with SYCE1. Interacts with proteasome subunit PSMA8; to participate in meiosis progression during spermatogenesis. In terms of tissue distribution, highest expression in retina, skeletal muscle, testis and colon.

It is found in the chromosome. Functionally, meiotic protein that localizes to the central element of the synaptonemal complex and is required for chromosome synapsis during meiotic recombination. Required for the appropriate processing of intermediate recombination nodules before crossover formation. This Homo sapiens (Human) protein is Protein SIX6OS1.